We begin with the raw amino-acid sequence, 779 residues long: uncharacterized protein (779 aa).

[4Fe-4S] cluster is bound by residues Cys72 and Cys75.

This sequence belongs to the prokaryotic molybdopterin-containing oxidoreductase family. [4Fe-4S] cluster serves as cofactor. The cofactor is Mo-bis(molybdopterin guanine dinucleotide).

This is an uncharacterized protein from Mycobacterium bovis (strain ATCC BAA-935 / AF2122/97).